We begin with the raw amino-acid sequence, 683 residues long: Multidrug resistance protein MdtO (683 aa).

9 helical membrane passes run Val43–Phe63, Phe75–Tyr95, Gly100–Met120, Leu125–Met145, Trp158–Phe178, Phe402–Trp422, Ile426–Ser446, Met457–Val477, and Ala483–Glu503.

It belongs to the MdtO family. Could be part of a tripartite efflux system composed of MdtN, MdtO and MdtP.

It localises to the cell inner membrane. Functionally, could be involved in resistance to puromycin, acriflavine and tetraphenylarsonium chloride. This Escherichia coli (strain K12) protein is Multidrug resistance protein MdtO (mdtO).